The primary structure comprises 515 residues: MEELQGYLEKDRSRQQHFLYPLLFQEYIYTLAYDHGLNGSIFYEPMEILSYDNKSSSVLVKHLITRMYQQNYLIYSINDSSQNRFVGHNNYFYSHFYSQMVSEGFAVIAEIPFSMRLVPSFEEKEIPKSQNLRSIHSIFPFLEDKLSHLNYVLDILIPYPIHLEILVQILQCRIQDVPSLHLLRLFLHEYHNWRSFITSNKSIYVFSKENKRLFRLLYNSYVSEYEFLFIYIRKQSYNLRPTSSRAFLERIHFYVKIEHFIIVCHNYFQKTLRFFKDSFMHYIRYQGKAILASRGTYLLIKKWKCYLVNFWQYYLYFWSKPYRIHINQLSNYSFYFMGYISSVLINPSAVKNQMLENLFLVDTVTKKFDTIVPVIPLIGSLSKAKFCTVAGHPISKPVWADLSDSDIIERFGRICRNLSHYHSGSSKKQSLYRIKYILRLSCARTLARKHKSTVRNLLQRLDSGLLEEFFTEEEQVICLILPKTTLFTLHGSHGERIWYLDIIRIDDLANSLDWS.

Belongs to the intron maturase 2 family. MatK subfamily.

It localises to the plastid. It is found in the chloroplast. Usually encoded in the trnK tRNA gene intron. Probably assists in splicing its own and other chloroplast group II introns. The polypeptide is Maturase K (Helonias bullata (Swamp pink)).